Consider the following 166-residue polypeptide: Large ribosomal subunit protein uL10 (166 aa).

The protein belongs to the universal ribosomal protein uL10 family. Part of the ribosomal stalk of the 50S ribosomal subunit. The N-terminus interacts with L11 and the large rRNA to form the base of the stalk. The C-terminus forms an elongated spine to which L12 dimers bind in a sequential fashion forming a multimeric L10(L12)X complex.

Functionally, forms part of the ribosomal stalk, playing a central role in the interaction of the ribosome with GTP-bound translation factors. This chain is Large ribosomal subunit protein uL10, found in Stutzerimonas stutzeri (strain A1501) (Pseudomonas stutzeri).